Here is a 634-residue protein sequence, read N- to C-terminus: Chaperone protein HtpG (634 aa).

Residues 1 to 344 (MSETVSQNKE…SNDLPLNVSR (344 aa)) are a; substrate-binding. Residues 345-561 (EILQDNKVTQ…DYEMGTQMAK (217 aa)) form a b region. Positions 562–634 (LLAAAGQAVP…GAINKLLTKV (73 aa)) are c.

This sequence belongs to the heat shock protein 90 family. As to quaternary structure, homodimer.

The protein resides in the cytoplasm. Functionally, molecular chaperone. Has ATPase activity. This chain is Chaperone protein HtpG, found in Vibrio parahaemolyticus serotype O3:K6 (strain RIMD 2210633).